Reading from the N-terminus, the 512-residue chain is Monocarboxylate transporter 14 (512 aa).

The Cytoplasmic segment spans residues 1 to 29; that stretch reads MYTSHEDIGYDLEDDRKAKNKKTLKPHPD. 12 helical membrane-spanning segments follow: residues 30-50, 76-96, 105-125, 129-149, 161-181, 193-211, 317-337, 355-375, 381-401, 410-430, 446-466, and 476-496; these read IDGGWAWMMVLSSFFVHILIM, WVSSLSMGITLIVGPFIGLFI, AIIGGLVNSLGWVLSAYAANV, FITFGVAAGLGSGMAYLPAVV, LAQGLSTTGTGFGTFLMTVLL, AMFIQGALSLNLCVCGALM, MFVAFIFWALFAYSSFVIPFI, FPLTSIIAILHIFGKVILGAV, ISVWNVFLIANFTLVLSIFLL, LAVICALIGFSSGYFSLMPVV, IIICANGISALLGPPFAGWIF, and FYICGLLYMVGILFLLIQPCI. The Cytoplasmic portion of the chain corresponds to 497-512; it reads QMIDQSRRKCIEGAHV.

It belongs to the major facilitator superfamily. Monocarboxylate porter (TC 2.A.1.13) family.

It localises to the cell membrane. Its function is as follows. Proton-linked monocarboxylate transporter. May catalyze the transport of monocarboxylates across the plasma membrane. In Mus musculus (Mouse), this protein is Monocarboxylate transporter 14 (Slc16a14).